Consider the following 210-residue polypeptide: HTH-type transcriptional repressor FabR (210 aa).

The HTH tetR-type domain maps to 10–70 (KTRRSLVEAA…TMVDESGLML (61 aa)). The H-T-H motif DNA-binding region spans 33–52 (SLREVAREAGIAPTSFYRHF).

In terms of assembly, homodimer.

It localises to the cytoplasm. Its function is as follows. Represses the transcription of fabB, involved in unsaturated fatty acid (UFA) biosynthesis. By controlling UFA production, FabR directly influences the physical properties of the membrane bilayer. This is HTH-type transcriptional repressor FabR from Klebsiella pneumoniae subsp. pneumoniae (strain ATCC 700721 / MGH 78578).